A 2104-amino-acid polypeptide reads, in one-letter code: Replication polyprotein (2104 aa).

The next 2 helical transmembrane spans lie at 23–43 (LVAS…FASS) and 70–90 (FNPF…YAFI). Residues 289–313 (VRVGEIREKVATLRNKLNTLQTKEL) adopt a coiled-coil conformation. Residues 329 to 501 (LEVLLIEVKV…NKMPKRGAID (173 aa)) form the SF3 helicase domain. Residues 1499–1520 (GDCGSPIVLASGKKAGKLIGFH) form a viral peptidase region. The RdRp catalytic domain maps to 1838 to 1965 (PNYFDADYKN…SVSDEYKDKY (128 aa)).

Post-translationally, specific enzymatic cleavages in vivo yield mature proteins.

Its subcellular location is the membrane. It carries out the reaction RNA(n) + a ribonucleoside 5'-triphosphate = RNA(n+1) + diphosphate. Its function is as follows. The peptidase activity is involved in polyprotein maturation, possibly along with hosts proteases. Transmembrane protein may be surface viral glycoprotein. RNA-directed RNA polymerase replicates the viral genome. The chain is Replication polyprotein from Drosophila melanogaster (Fruit fly).